A 211-amino-acid polypeptide reads, in one-letter code: Thymidylate kinase (211 aa).

Residue 10 to 17 (GGDGVGKS) coordinates ATP.

Belongs to the thymidylate kinase family.

The catalysed reaction is dTMP + ATP = dTDP + ADP. Its function is as follows. Phosphorylation of dTMP to form dTDP in both de novo and salvage pathways of dTTP synthesis. In Clavibacter michiganensis subsp. michiganensis (strain NCPPB 382), this protein is Thymidylate kinase.